A 498-amino-acid chain; its full sequence is MEKYIMSLDQGTTSSRCIIFNKKGEVVSVAQKEFTQIYPKAGWVEHDPLEIWGKQAGVAGEALNIARISPEQIAGIGITNQRETTVVWNKRTGMPVYNAIVWQCRRTAGYCDELREKGIDKTIKEKTGLMLDAYFSATKIKWILDNVEGARELAEKGDLLFGNIDTWLIWNMTKGKIHVTDYTNASRTMLFNIHELKWDEELLEILDIPKSMLPEVKPSSCVYGETDEILFGVSIPISGDAGDQQAALFGQTCFNAGMAKNTYGTGCFLLMNTGEKAVDSKNGLLTTIAVGIDGKVEYALEGSIFIGGAVIQWLRDELRMVKTAQETEKYATEVEDNNGVYLVPAFVGIGAPYWDSYARGTILGLTRGAKKEHIIRAALESMAYQTHDVLKAMEEDSGIELKALKVDGGACQNNFLMQFQSDILGVEVDRPEVVETTALGAAYLAGLAVGYWKDRNEISQNWAISRSFAPAMEDEKKEKLIKGWHKAVTKAMDWEERE.

Thr-12 is an ADP binding site. 3 residues coordinate ATP: Thr-12, Thr-13, and Ser-14. Residue Thr-12 participates in sn-glycerol 3-phosphate binding. An ADP-binding site is contributed by Arg-16. Sn-glycerol 3-phosphate-binding residues include Arg-82, Glu-83, Tyr-134, and Asp-243. 5 residues coordinate glycerol: Arg-82, Glu-83, Tyr-134, Asp-243, and Gln-244. ADP contacts are provided by Thr-265 and Gly-308. Residues Thr-265, Gly-308, Gln-312, and Gly-409 each coordinate ATP. ADP-binding residues include Gly-409 and Asn-413.

Belongs to the FGGY kinase family. Homotetramer and homodimer (in equilibrium).

The enzyme catalyses glycerol + ATP = sn-glycerol 3-phosphate + ADP + H(+). Its pathway is polyol metabolism; glycerol degradation via glycerol kinase pathway; sn-glycerol 3-phosphate from glycerol: step 1/1. Its activity is regulated as follows. Activated by phosphorylation and inhibited by fructose 1,6-bisphosphate (FBP). In terms of biological role, key enzyme in the regulation of glycerol uptake and metabolism. Catalyzes the phosphorylation of glycerol to yield sn-glycerol 3-phosphate. The polypeptide is Glycerol kinase (Clostridium botulinum (strain Loch Maree / Type A3)).